A 241-amino-acid polypeptide reads, in one-letter code: Phosphoribosylaminoimidazole-succinocarboxamide synthase (241 aa).

Belongs to the SAICAR synthetase family.

It carries out the reaction 5-amino-1-(5-phospho-D-ribosyl)imidazole-4-carboxylate + L-aspartate + ATP = (2S)-2-[5-amino-1-(5-phospho-beta-D-ribosyl)imidazole-4-carboxamido]succinate + ADP + phosphate + 2 H(+). The protein operates within purine metabolism; IMP biosynthesis via de novo pathway; 5-amino-1-(5-phospho-D-ribosyl)imidazole-4-carboxamide from 5-amino-1-(5-phospho-D-ribosyl)imidazole-4-carboxylate: step 1/2. The polypeptide is Phosphoribosylaminoimidazole-succinocarboxamide synthase (Latilactobacillus sakei subsp. sakei (strain 23K) (Lactobacillus sakei subsp. sakei)).